A 255-amino-acid polypeptide reads, in one-letter code: NAD kinase (255 aa).

Aspartate 44 (proton acceptor) is an active-site residue. Residues 44 to 45 (DG), histidine 49, 114 to 115 (NE), aspartate 144, alanine 152, 155 to 160 (SAYNLS), and glutamine 216 each bind NAD(+).

The protein belongs to the NAD kinase family. A divalent metal cation serves as cofactor.

The protein localises to the cytoplasm. It catalyses the reaction NAD(+) + ATP = ADP + NADP(+) + H(+). Its function is as follows. Involved in the regulation of the intracellular balance of NAD and NADP, and is a key enzyme in the biosynthesis of NADP. Catalyzes specifically the phosphorylation on 2'-hydroxyl of the adenosine moiety of NAD to yield NADP. The chain is NAD kinase from Rickettsia typhi (strain ATCC VR-144 / Wilmington).